The chain runs to 606 residues: Mannan endo-1,4-beta-mannosidase A (606 aa).

The first 19 residues, 1 to 19 (MKSLNVILTLLSLIISVLS), serve as a signal peptide directing secretion. In terms of domain architecture, CBM6 spans 22–140 (VYYEAEDGKL…WMWVDAFVIN (119 aa)). In terms of domain architecture, GH26 spans 164–458 (PAAKKLYDFL…FNHKTVMNMD (295 aa)). Position 285 (Trp285) interacts with substrate. Catalysis depends on Glu318, which acts as the Proton donor. 2 residues coordinate substrate: Trp323 and Tyr378. Glu406 serves as the catalytic Nucleophile. The interval 472-489 (SGSSHNGNSESNSNTGNS) is linker. CBM10 domains lie at 491–527 (ECWS…CGIV), 530–566 (SCWS…CGIV), and 569–605 (SCWA…CGIL). Trp493 is a binding site for substrate.

It belongs to the glycosyl hydrolase 26 family.

It catalyses the reaction Random hydrolysis of (1-&gt;4)-beta-D-mannosidic linkages in mannans, galactomannans and glucomannans.. Hydrolyzes 1,4-beta linked polysaccharide backbones of mannans, one of the major hemicellulose components in hardwoods and softwoods. Shows very high activity against mannohexaose but not against mannopentaose and smaller mannooligosaccharides. The major products released from mannooligosaccharide hydrolysis are mannose and mannobiose. The reiterated 40 AA domain is involved in binding the cellulase-hemicellulase complex. The sequence is that of Mannan endo-1,4-beta-mannosidase A (MANA) from Piromyces sp.